The primary structure comprises 1528 residues: Multidrug resistance-associated protein 1 (1528 aa).

At 1–33 the chain is on the extracellular side; it reads MALRSFCSADGSDPLWDWNVTWHTSNPDFTKCF. Asn19 is a glycosylation site (N-linked (GlcNAc...) asparagine). Residues 34 to 54 form a helical membrane-spanning segment; it reads QNTVLTWVPCFYLWSCFPLYF. The Cytoplasmic portion of the chain corresponds to 55–74; sequence FYLSRHDRGYIQMTHLNKTK. The helical transmembrane segment at 75–95 threads the bilayer; that stretch reads TALGFFLWIICWADLFYSFWE. Over 96–100 the chain is Extracellular; the sequence is RSQGV. The chain crosses the membrane as a helical span at residues 101-121; that stretch reads LRAPVLLVSPTLLGITMLLAT. Over 122–133 the chain is Cytoplasmic; the sequence is FLIQLERRKGVQ. The helical transmembrane segment at 134–154 threads the bilayer; sequence SSGIMLTFWLVALLCALAILR. Over 155–172 the chain is Extracellular; that stretch reads SKIISALKKDAHVDVFRD. Residues 173 to 193 form a helical membrane-spanning segment; it reads STFYLYFTLVLVQLVLSCFSD. The Cytoplasmic portion of the chain corresponds to 194–317; sequence CSPLFSETVH…KDREPSLFKV (124 aa). Tyr277 carries the post-translational modification Phosphotyrosine. Residue Ser290 is modified to Phosphoserine. A helical transmembrane segment spans residues 318 to 338; sequence LYKTFGPYFLMSFLYKALHDL. Positions 326 to 609 constitute an ABC transmembrane type-1 1 domain; it reads FLMSFLYKAL…LPMVISSIVQ (284 aa). The Extracellular segment spans residues 339-364; that stretch reads MMFAGPKILELIINFVNDREAPDWQG. A helical transmembrane segment spans residues 365–385; sequence YFYTALLFVSACLQTLALHQY. Residues 386 to 441 are Cytoplasmic-facing; the sequence is FHICFVSGMRIKTAVVGAVYRKALLITNAARKSSTVGEIVNLMSVDAQRFMDLATY. A helical membrane pass occupies residues 442–462; the sequence is INMIWSAPLQVILALYFLWLS. Topologically, residues 463–465 are extracellular; that stretch reads LGP. A helical transmembrane segment spans residues 466-486; sequence SVLAGVAVMILMVPLNAVMAM. The Cytoplasmic portion of the chain corresponds to 487–548; it reads KTKTYQVAHM…VLKKSAYLAA (62 aa). Lys504 carries the N6-succinyllysine modification. Residues 549-569 traverse the membrane as a helical segment; that stretch reads VGTFTWVCTPFLVALSTFAVF. Over 570-591 the chain is Extracellular; it reads VTVDERNILDAKKAFVSLALFN. The chain crosses the membrane as a helical span at residues 592–612; sequence ILRFPLNILPMVISSIVQASV. Residues 613-963 are Cytoplasmic-facing; that stretch reads SLKRLRIFLS…VQLSVYWNYM (351 aa). Positions 644 to 868 constitute an ABC transporter 1 domain; that stretch reads ITVKNATFTW…DGAFAEFLRT (225 aa). An ATP-binding site is contributed by 678-685; it reads GQVGCGKS. 2 disordered regions span residues 876-895 and 909-929; these read LASE…PVEN and RHLS…SSIA. Phosphoserine is present on residues Ser878, Ser882, Ser912, and Ser927. Positions 910–929 are enriched in polar residues; the sequence is HLSNSSSHSGDTSQQHSSIA. Residues 964 to 984 form a helical membrane-spanning segment; the sequence is KAIGLFITFLSIFLFLCNHVS. Positions 971–1253 constitute an ABC transmembrane type-1 2 domain; the sequence is TFLSIFLFLC…LVRMSSEMET (283 aa). Residues 985–1022 are Extracellular-facing; that stretch reads ALASNYWLSLWTDDPPVVNGTQANRNFRLSVYGALGIL. The N-linked (GlcNAc...) asparagine glycan is linked to Asn1003. Residues 1023–1043 form a helical membrane-spanning segment; sequence QGAAIFGYSMAVSIGGIFASR. Residues 1044 to 1086 lie on the Cytoplasmic side of the membrane; sequence RLHLDLLYNVLRSPMSFFERTPSGNLVNRFSKELDTVDSMIPQ. Residues 1087–1107 traverse the membrane as a helical segment; it reads VIKMFMGSLFSVIGAVIIILL. Position 1108 (Ala1108) is a topological domain, extracellular. Residues 1109–1129 traverse the membrane as a helical segment; that stretch reads TPIAAVIIPPLGLVYFFVQRF. Residues 1130-1200 are Cytoplasmic-facing; the sequence is YVASSRQLKR…VANRWLAVRL (71 aa). A helical membrane pass occupies residues 1201 to 1221; it reads ECVGNCIVLFAALFAVISRHS. Topologically, residues 1222–1223 are extracellular; it reads LS. A helical transmembrane segment spans residues 1224-1244; the sequence is AGLVGLSVSYSLQITAYLNWL. The Cytoplasmic segment spans residues 1245-1528; sequence VRMSSEMETN…YSMAKDAGLV (284 aa). Residues 1290-1524 enclose the ABC transporter 2 domain; it reads VEFRDYCLRY…RGIFYSMAKD (235 aa). Residue 1324–1331 coordinates ATP; it reads GRTGAGKS.

It belongs to the ABC transporter superfamily. ABCC family. Conjugate transporter (TC 3.A.1.208) subfamily.

Its subcellular location is the cell membrane. It localises to the basolateral cell membrane. It carries out the reaction ATP + H2O + xenobioticSide 1 = ADP + phosphate + xenobioticSide 2.. It catalyses the reaction an S-substituted glutathione(in) + ATP + H2O = an S-substituted glutathione(out) + ADP + phosphate + H(+). The catalysed reaction is leukotriene C4(in) + ATP + H2O = leukotriene C4(out) + ADP + phosphate + H(+). The enzyme catalyses sphing-4-enine 1-phosphate(in) + ATP + H2O = sphing-4-enine 1-phosphate(out) + ADP + phosphate + H(+). It carries out the reaction 17beta-estradiol 17-O-(beta-D-glucuronate)(in) + ATP + H2O = 17beta-estradiol 17-O-(beta-D-glucuronate)(out) + ADP + phosphate + H(+). It catalyses the reaction vincristine(in) + ATP + H2O = vincristine(out) + ADP + phosphate + H(+). The catalysed reaction is daunorubicin(in) + ATP + H2O = daunorubicin(out) + ADP + phosphate + H(+). The enzyme catalyses 2',3'-cGAMP(in) + ATP + H2O = 2',3'-cGAMP(out) + ADP + phosphate + H(+). It carries out the reaction S-[(2E,6E,10E)-geranylgeranyl]-L-glutathione(in) + ATP + H2O = S-[(2E,6E,10E)-geranylgeranyl]-L-glutathione(out) + ADP + phosphate + H(+). It catalyses the reaction prostaglandin A2-S-(R)-glutathione(in) + ATP + H2O = prostaglandin A2-S-(R)-glutathione(out) + ADP + phosphate + H(+). The catalysed reaction is prostaglandin A2-S-(S)-glutathione(in) + ATP + H2O = prostaglandin A2-S-(S)-glutathione(out) + ADP + phosphate + H(+). MK 571 inhibits sphingosine 1-phosphate and leukotriene C4 export. Functionally, mediates export of organic anions and drugs from the cytoplasm. Mediates ATP-dependent transport of glutathione and glutathione conjugates, leukotriene C4, estradiol-17-beta-o-glucuronide, methotrexate, antiviral drugs and other xenobiotics. Confers resistance to anticancer drugs by decreasing accumulation of drugs in cells, and by mediating ATP- and GSH-dependent drug export. Hydrolyzes ATP with low efficiency. Catalyzes the export of sphingosine 1-phosphate from mast cells independently of their degranulation. Participates in inflammatory response by allowing export of leukotriene C4 from leukotriene C4-synthesizing cells. Mediates ATP-dependent, GSH-independent cyclic GMP-AMP (cGAMP) export. Thus, by limiting intracellular cGAMP concentrations negatively regulates the cGAS-STING pathway. Exports S-geranylgeranyl-glutathione (GGG) in lymphoid cells and stromal compartments of lymphoid organs. ABCC1 (via extracellular transport) with GGT5 (via GGG catabolism) establish GGG gradients within lymphoid tissues to position P2RY8-positive lymphocytes at germinal centers in lymphoid follicles and restrict their chemotactic transmigration from blood vessels to the bone marrow parenchyma. Mediates basolateral export of GSH-conjugated R- and S-prostaglandin A2 diastereomers in polarized epithelial cells. The chain is Multidrug resistance-associated protein 1 from Mus musculus (Mouse).